A 431-amino-acid chain; its full sequence is Probable amino-acid ABC transporter periplasmic-binding protein y4oP (431 aa).

Residues 1–25 (MKRRTFTAGLAALPFLGSSLTRAFA) form the signal peptide.

It belongs to the bacterial solute-binding protein 1 family.

The protein localises to the periplasm. Probably part of the binding-protein-dependent transport system y4oPQRS. This system probably transports a sugar-like molecule. The protein is Probable amino-acid ABC transporter periplasmic-binding protein y4oP of Sinorhizobium fredii (strain NBRC 101917 / NGR234).